Consider the following 659-residue polypeptide: Cytochrome bo(3) ubiquinol oxidase subunit 1 (659 aa).

The Extracellular segment spans residues 1 to 14 (MFGKLTLKAIPVDE). Residues 15–35 (PIIMVTYISIILIALFISFSI) form a helical membrane-spanning segment. At 36 to 58 (TYFKKWKYLWYEWFTTVDHKKIS) the chain is on the cytoplasmic side. A helical transmembrane segment spans residues 59 to 79 (IMYGILAFIMLFRGFVDAILM). A ubiquinone-binding residues include arginine 71, aspartate 75, and histidine 98. Residues 80-106 (RTQQVIASSGNTGFLPPHHYDQIFTAH) lie on the Extracellular side of the membrane. Histidine 106 contacts heme b. Residues 107 to 127 (GVIMIFFVAMPLVIGLMNLVV) form a helical membrane-spanning segment. Over 128–145 (PLQIGARDVAFPFLNNLS) the chain is Cytoplasmic. The helical transmembrane segment at 146–166 (FWLNVSGAILLTLSLGIGEFA) threads the bilayer. Over 167-189 (QTGWLAYPPLSEVKYSPGVGVDY) the chain is Extracellular. Position 170 (tryptophan 170) interacts with heme b. Residues 190–210 (WIWSLQISGVGTTLTGINFLI) form a helical membrane-spanning segment. At 211–225 (TILKMRAPGMCFFKM) the chain is on the cytoplasmic side. The helical transmembrane segment at 226–246 (PVFTWAALCTNILIVISFPVL) threads the bilayer. The Extracellular portion of the chain corresponds to 247–277 (TTTLLLLTLDRCFDFHFFTNNFGGNPMMYVN). The chain crosses the membrane as a helical span at residues 278–298 (LIWIWGHPEVYILVLPVFGVF). Histidine 284 is a Cu(2+) binding site. A cross-link (1'-histidyl-3'-tyrosine (His-Tyr)) is located at residues 284–288 (HPEVY). Fe(II)-heme o is bound at residue tyrosine 288. Topologically, residues 299-309 (SEVVATFSKKR) are cytoplasmic. A helical membrane pass occupies residues 310–330 (LFGYVSLVWATLAITILSFIV). Over 331–347 (WLHHFFTMGAGSNVNAF) the chain is Extracellular. Cu(2+) contacts are provided by histidine 333 and histidine 334. A helical transmembrane segment spans residues 348-368 (FGITTMIIAIPTGVKIFNWLF). The Cytoplasmic segment spans residues 369–380 (TMYQGRVHMHSS). The chain crosses the membrane as a helical span at residues 381–401 (MLWTIGFLITFSIGGMTGVLL). Residues 402–413 (SIPPADFILHNS) lie on the Extracellular side of the membrane. Fe(II)-heme o contacts are provided by histidine 411 and histidine 419. Residues 414–434 (LFLVAHFHNVIIGGVVFGCFA) traverse the membrane as a helical segment. Histidine 421 lines the heme b pocket. The Cytoplasmic segment spans residues 435-456 (GINYWFPKLFGFILNELWGKRA). Residues 457–477 (FWFWIIGFFTAFMPLYFLGFM) traverse the membrane as a helical segment. The Extracellular segment spans residues 478–490 (GMTRRLSQNIDIE). Heme b-binding residues include arginine 481 and arginine 482. Residues 491 to 511 (FHFLLSIAAIGAILIGIGILC) form a helical membrane-spanning segment. Topologically, residues 512–580 (QIIQFWVSVR…KNQVQKKQYS (69 aa)) are cytoplasmic. A helical membrane pass occupies residues 581–601 (AIHMPKNTGLGIFISFFSLLF). Topologically, residues 602–605 (GFSA) are extracellular. A helical transmembrane segment spans residues 606 to 626 (VWNIIWLSFLSFLVVIISLIF). At 627 to 659 (KSIDENTEYTVSVKEIESIENRHLENVQKAGLK) the chain is on the cytoplasmic side.

The protein belongs to the heme-copper respiratory oxidase family. As to quaternary structure, the cytochrome bo(3) ubiquinol oxidase complex is a heterooctamer of two A chains, two B chains, two C chains and two D chains. The cofactor is Cu(2+). Requires heme b as cofactor. It depends on Fe(II)-heme o as a cofactor.

The protein localises to the cell membrane. It carries out the reaction 2 a ubiquinol + O2 + n H(+)(in) = 2 a ubiquinone + 2 H2O + n H(+)(out). Functionally, cytochrome bo(3) ubiquinol oxidase is the terminal enzyme in the aerobic respiratory chain. Catalyzes the four-electron reduction of O2 to water, using a ubiquinol as a membrane soluble electron donor for molecular oxygen reduction. Has proton pump activity across the membrane in addition to electron transfer, pumping 2 protons/electron and generating a proton motive force. All the redox centers of this enzyme complex are located within the largest subunit, subunit I. Protons are probably pumped via D- and K- channels found in this subunit. The protein is Cytochrome bo(3) ubiquinol oxidase subunit 1 (cyoB) of Buchnera aphidicola subsp. Schizaphis graminum (strain Sg).